A 467-amino-acid polypeptide reads, in one-letter code: uncharacterized protein (467 aa).

The segment at 416–467 (KQQRAQTAVVGTTKELVSKATHMKPPRTPPGEAEHRKRSQSLAICQWNKNSR) is disordered. A compositionally biased stretch (polar residues) spans 455–467 (QSLAICQWNKNSR).

This is an uncharacterized protein from Homo sapiens (Human).